Here is a 168-residue protein sequence, read N- to C-terminus: Nascent polypeptide-associated complex subunit alpha (168 aa).

An NAC-A/B domain is found at 14-78; that stretch reads SKNEKKAREL…PKVDDFTRRL (65 aa). The interval 83–129 is disordered; the sequence is QQAASAAKDPQSIQADMAAAAAAPAAPAAPAAAPEEDEAGQVDESGL. Positions 100–115 are enriched in low complexity; sequence AAAAAAPAAPAAPAAA. In terms of domain architecture, UBA spans 129–168; sequence LDGQDIELVMQQANVSRNKAVKALREHNSDIVNAIMSLSK.

The protein belongs to the NAC-alpha family. Part of the nascent polypeptide-associated complex (NAC), consisting of EGD2 and EGD1. NAC associates with ribosomes via EGD1.

Its subcellular location is the cytoplasm. The protein localises to the nucleus. Functionally, component of the nascent polypeptide-associated complex (NAC), a dynamic component of the ribosomal exit tunnel, protecting the emerging polypeptides from interaction with other cytoplasmic proteins to ensure appropriate nascent protein targeting. The NAC complex also promotes mitochondrial protein import by enhancing productive ribosome interactions with the outer mitochondrial membrane and blocks the inappropriate interaction of ribosomes translating non-secretory nascent polypeptides with translocation sites in the membrane of the endoplasmic reticulum. EGD2 may also be involved in transcription regulation. The polypeptide is Nascent polypeptide-associated complex subunit alpha (EGD2) (Eremothecium gossypii (strain ATCC 10895 / CBS 109.51 / FGSC 9923 / NRRL Y-1056) (Yeast)).